A 146-amino-acid polypeptide reads, in one-letter code: 1,4-dihydroxy-2-naphthoyl-CoA hydrolase (146 aa).

The active site involves D15.

The protein belongs to the 4-hydroxybenzoyl-CoA thioesterase family. DHNA-CoA hydrolase subfamily.

It carries out the reaction 1,4-dihydroxy-2-naphthoyl-CoA + H2O = 1,4-dihydroxy-2-naphthoate + CoA + H(+). The protein operates within cofactor biosynthesis; phylloquinone biosynthesis. It participates in quinol/quinone metabolism; 1,4-dihydroxy-2-naphthoate biosynthesis; 1,4-dihydroxy-2-naphthoate from chorismate: step 7/7. Its function is as follows. Catalyzes the hydrolysis of 1,4-dihydroxy-2-naphthoyl-CoA (DHNA-CoA) to 1,4-dihydroxy-2-naphthoate (DHNA), a reaction involved in phylloquinone (vitamin K1) biosynthesis. The polypeptide is 1,4-dihydroxy-2-naphthoyl-CoA hydrolase (Picosynechococcus sp. (strain ATCC 27264 / PCC 7002 / PR-6) (Agmenellum quadruplicatum)).